The chain runs to 728 residues: Phosphoribosylformylglycinamidine synthase subunit PurL (728 aa).

The active site involves His40. Tyr43 and Lys82 together coordinate ATP. Glu84 contacts Mg(2+). Substrate is bound by residues 85 to 88 and Arg107; that span reads SHNH. Residue His86 is the Proton acceptor of the active site. Residue Asp108 participates in Mg(2+) binding. Gln231 lines the substrate pocket. Asp259 contacts Mg(2+). 303–305 lines the substrate pocket; that stretch reads ESQ. Residues Asn483 and Gly520 each coordinate ATP. Position 521 (Asn521) interacts with Mg(2+). Substrate is bound at residue Ser523.

It belongs to the FGAMS family. Monomer. Part of the FGAM synthase complex composed of 1 PurL, 1 PurQ and 2 PurS subunits.

It is found in the cytoplasm. The enzyme catalyses N(2)-formyl-N(1)-(5-phospho-beta-D-ribosyl)glycinamide + L-glutamine + ATP + H2O = 2-formamido-N(1)-(5-O-phospho-beta-D-ribosyl)acetamidine + L-glutamate + ADP + phosphate + H(+). Its pathway is purine metabolism; IMP biosynthesis via de novo pathway; 5-amino-1-(5-phospho-D-ribosyl)imidazole from N(2)-formyl-N(1)-(5-phospho-D-ribosyl)glycinamide: step 1/2. Part of the phosphoribosylformylglycinamidine synthase complex involved in the purines biosynthetic pathway. Catalyzes the ATP-dependent conversion of formylglycinamide ribonucleotide (FGAR) and glutamine to yield formylglycinamidine ribonucleotide (FGAM) and glutamate. The FGAM synthase complex is composed of three subunits. PurQ produces an ammonia molecule by converting glutamine to glutamate. PurL transfers the ammonia molecule to FGAR to form FGAM in an ATP-dependent manner. PurS interacts with PurQ and PurL and is thought to assist in the transfer of the ammonia molecule from PurQ to PurL. The sequence is that of Phosphoribosylformylglycinamidine synthase subunit PurL from Carboxydothermus hydrogenoformans (strain ATCC BAA-161 / DSM 6008 / Z-2901).